The primary structure comprises 401 residues: Imidazolonepropionase (401 aa).

H66 and H68 together coordinate Fe(3+). The Zn(2+) site is built by H66 and H68. Positions 75, 138, and 171 each coordinate 4-imidazolone-5-propanoate. An N-formimidoyl-L-glutamate-binding site is contributed by Y138. H236 is a binding site for Fe(3+). A Zn(2+)-binding site is contributed by H236. Q239 serves as a coordination point for 4-imidazolone-5-propanoate. D311 provides a ligand contact to Fe(3+). Residue D311 coordinates Zn(2+). N-formimidoyl-L-glutamate is bound by residues N313 and G315. 4-imidazolone-5-propanoate is bound at residue T316.

Belongs to the metallo-dependent hydrolases superfamily. HutI family. Zn(2+) is required as a cofactor. Fe(3+) serves as cofactor.

Its subcellular location is the cytoplasm. It catalyses the reaction 4-imidazolone-5-propanoate + H2O = N-formimidoyl-L-glutamate. It participates in amino-acid degradation; L-histidine degradation into L-glutamate; N-formimidoyl-L-glutamate from L-histidine: step 3/3. Its function is as follows. Catalyzes the hydrolytic cleavage of the carbon-nitrogen bond in imidazolone-5-propanoate to yield N-formimidoyl-L-glutamate. It is the third step in the universal histidine degradation pathway. The polypeptide is Imidazolonepropionase (Acinetobacter baumannii (strain AB0057)).